The sequence spans 224 residues: uncharacterized protein (224 aa).

Residues H57, H59, D61, H62, H138, D162, and H203 each coordinate Zn(2+).

This sequence belongs to the metallo-beta-lactamase superfamily. Glyoxalase II family. Zn(2+) serves as cofactor.

This is an uncharacterized protein from Mycobacterium tuberculosis (strain CDC 1551 / Oshkosh).